We begin with the raw amino-acid sequence, 151 residues long: Ribosome maturation factor RimP (151 aa).

It belongs to the RimP family.

It localises to the cytoplasm. Required for maturation of 30S ribosomal subunits. This is Ribosome maturation factor RimP from Caldicellulosiruptor saccharolyticus (strain ATCC 43494 / DSM 8903 / Tp8T 6331).